A 234-amino-acid chain; its full sequence is Peptidase E (234 aa).

Active-site charge relay system residues include serine 120, aspartate 135, and histidine 157.

This sequence belongs to the peptidase S51 family.

It is found in the cytoplasm. It carries out the reaction Dipeptidase E catalyzes the hydrolysis of dipeptides Asp-|-Xaa. It does not act on peptides with N-terminal Glu, Asn or Gln, nor does it cleave isoaspartyl peptides.. Functionally, hydrolyzes dipeptides containing N-terminal aspartate residues. May play a role in allowing the cell to use peptide aspartate to spare carbon otherwise required for the synthesis of the aspartate family of amino acids. This chain is Peptidase E, found in Salmonella gallinarum (strain 287/91 / NCTC 13346).